Consider the following 85-residue polypeptide: U1-ctenitoxin-Pn1a (85 aa).

The signal sequence occupies residues methionine 1 to alanine 16. A propeptide spanning residues serine 17–arginine 34 is cleaved from the precursor. 5 disulfide bridges follow: cysteine 35-cysteine 49, cysteine 42-cysteine 55, cysteine 46-cysteine 81, cysteine 48-cysteine 65, and cysteine 57-cysteine 63. Positions glutamine 82–isoleucine 85 are excised as a propeptide.

Belongs to the neurotoxin 03 (Tx2) family. 05 subfamily. Expressed by the venom gland.

It is found in the secreted. Functionally, insecticidal neurotoxin that reversibly inhibits the N-methyl-D-aspartate (NMDA)-subtype of ionotropic glutamate receptor (GRIN) and inhibits inactivation of insect sodium channels (Nav). In vivo, is highly toxic to insects. The protein is U1-ctenitoxin-Pn1a of Phoneutria nigriventer (Brazilian armed spider).